A 313-amino-acid chain; its full sequence is tRNA (guanine-N(7)-)-methyltransferase (313 aa).

S-adenosyl-L-methionine contacts are provided by E33, E58, and D85. Residues K112, D144, and 177–180 (TRYE) contribute to the substrate site.

The protein belongs to the class I-like SAM-binding methyltransferase superfamily. TrmB family.

The enzyme catalyses guanosine(46) in tRNA + S-adenosyl-L-methionine = N(7)-methylguanosine(46) in tRNA + S-adenosyl-L-homocysteine. It participates in tRNA modification; N(7)-methylguanine-tRNA biosynthesis. Catalyzes the formation of N(7)-methylguanine at position 46 (m7G46) in tRNA. The chain is tRNA (guanine-N(7)-)-methyltransferase from Thermotoga maritima (strain ATCC 43589 / DSM 3109 / JCM 10099 / NBRC 100826 / MSB8).